Consider the following 536-residue polypeptide: MSKFVFVTGGVVSSIGKGIVAASLGRLLKSRGYSVSILKLDPYLNVDPGTMSPFQHGEVFVTEDGAETDLDLGHYERFTDTAMTRLNSVTTGSIYQAVINKERRGSYNGGTVQVIPHITGEIRERIHRVAANSNADIIITEIGGTVGDIESLPFLEAIREFKNDVNRNDVAYIHVTLLPFIKTSGEIKTKPTQHSVKELRSIGIQPDLLVCRSDKSINEGLKKKLSGFCGVNIKSVIEALDADSIYSVPLALKKEGLCKETLKYLELEDKECDLKNWEALIHNLRNPGDPIKVALVGKYIELGDAYLSVVEALRHACIEKKASLDLHWVSAEMIEKGSAETYLKEVDAIVVPGGFGNRGVNGKISAIKFAREKKIPFLGLCLGMQCAVIEWARNVANLPDASSSELNPDTPNPVIHLLPEQEDVVDLGGTMRLGVYPCRLTNNTTGKKLYDEDVIYERHRHRYEFNNYYKQSFLNSGYKISGTSPDGRLVELIELENHPYFLACQYHPEFLSRPGKPHPLFQGLIKASQEKLTQSN.

The segment at Met-1–Leu-267 is amidoligase domain. CTP is bound at residue Ser-13. Ser-13 contacts UTP. ATP-binding positions include Ser-14 to Ile-19 and Asp-71. Mg(2+) contacts are provided by Asp-71 and Glu-141. CTP contacts are provided by residues Asp-148–Glu-150, Lys-188–Gln-193, and Lys-224. UTP-binding positions include Lys-188–Gln-193 and Lys-224. In terms of domain architecture, Glutamine amidotransferase type-1 spans Lys-292–Gln-534. An L-glutamine-binding site is contributed by Gly-354. The Nucleophile; for glutamine hydrolysis role is filled by Cys-381. Residues Leu-382–Gln-385, Glu-405, and Arg-462 each bind L-glutamine. Catalysis depends on residues His-507 and Glu-509.

Belongs to the CTP synthase family. As to quaternary structure, homotetramer.

It catalyses the reaction UTP + L-glutamine + ATP + H2O = CTP + L-glutamate + ADP + phosphate + 2 H(+). The enzyme catalyses L-glutamine + H2O = L-glutamate + NH4(+). The catalysed reaction is UTP + NH4(+) + ATP = CTP + ADP + phosphate + 2 H(+). Its pathway is pyrimidine metabolism; CTP biosynthesis via de novo pathway; CTP from UDP: step 2/2. Allosterically activated by GTP, when glutamine is the substrate; GTP has no effect on the reaction when ammonia is the substrate. The allosteric effector GTP functions by stabilizing the protein conformation that binds the tetrahedral intermediate(s) formed during glutamine hydrolysis. Inhibited by the product CTP, via allosteric rather than competitive inhibition. Functionally, catalyzes the ATP-dependent amination of UTP to CTP with either L-glutamine or ammonia as the source of nitrogen. Regulates intracellular CTP levels through interactions with the four ribonucleotide triphosphates. The chain is CTP synthase from Prochlorococcus marinus (strain MIT 9215).